Reading from the N-terminus, the 295-residue chain is Small ribosomal subunit protein uS2 (295 aa).

It belongs to the universal ribosomal protein uS2 family. As to quaternary structure, component of the small ribosomal subunit. Mature ribosomes consist of a small (40S) and a large (60S) subunit. The 40S subunit contains about 33 different proteins and 1 molecule of RNA (18S). The 60S subunit contains about 49 different proteins and 3 molecules of RNA (25S, 5.8S and 5S). Interacts with RPS21.

The protein resides in the cytoplasm. Functionally, required for the assembly and/or stability of the 40S ribosomal subunit. Required for the processing of the 20S rRNA-precursor to mature 18S rRNA in a late step of the maturation of 40S ribosomal subunits. The sequence is that of Small ribosomal subunit protein uS2 from Paracoccidioides brasiliensis (strain Pb03).